The chain runs to 464 residues: Asparagine--tRNA ligase (464 aa).

It belongs to the class-II aminoacyl-tRNA synthetase family. In terms of assembly, homodimer.

The protein resides in the cytoplasm. The catalysed reaction is tRNA(Asn) + L-asparagine + ATP = L-asparaginyl-tRNA(Asn) + AMP + diphosphate + H(+). In Xanthomonas axonopodis pv. citri (strain 306), this protein is Asparagine--tRNA ligase.